The following is a 678-amino-acid chain: THO complex subunit 5 homolog B (678 aa).

Disordered regions lie at residues 1–37 (MSSD…EEAE) and 294–329 (ALFK…VQLD). The short motif at 7-10 (KKRK) is the Nuclear localization signal element. The segment covering 14–37 (NRSEDGKRGRHDEQEGRYYSEEAE) has biased composition (basic and acidic residues). Acidic residues predominate over residues 301 to 314 (DSQDDESDSDAEEE).

Belongs to the THOC5 family. In terms of assembly, component of the THO subcomplex, which is composed of thoc1, thoc2, thoc3, thoc5, thoc6 and thoc7. Component of the transcription/export (TREX) complex at least composed of alyref/thoc4, ddx39b, sarnp/cip29, chtop and the THO subcomplex. Interacts with thoc7.

It localises to the nucleus. The protein localises to the nucleus speckle. Its subcellular location is the cytoplasm. Component of the THO subcomplex of the TREX complex which is thought to couple mRNA transcription, processing and nuclear export, and which specifically associates with spliced mRNA and not with unspliced pre-mRNA. Plays a key structural role in the oligomerization of the THO-ddx39b complex. TREX is recruited to spliced mRNAs by a transcription-independent mechanism, binds to mRNA upstream of the exon-junction complex (EJC) and is recruited in a splicing- and cap-dependent manner to a region near the 5' end of the mRNA where it functions in mRNA export to the cytoplasm via the TAP/NXF1 pathway. May be involved in cell differentiation. The sequence is that of THO complex subunit 5 homolog B (thoc5-b) from Xenopus laevis (African clawed frog).